Here is a 357-residue protein sequence, read N- to C-terminus: Chorismate synthase (357 aa).

Residues 38–49 (EKDIQPDLDRRK) are compositionally biased toward basic and acidic residues. The tract at residues 38–60 (EKDIQPDLDRRKPGTSRYTTPRR) is disordered. Positions 48 and 54 each coordinate NADP(+). Residues 125-127 (RSS), 243-244 (NA), G283, 298-302 (KPTSS), and R324 each bind FMN.

This sequence belongs to the chorismate synthase family. Homotetramer. Requires FMNH2 as cofactor.

It carries out the reaction 5-O-(1-carboxyvinyl)-3-phosphoshikimate = chorismate + phosphate. It participates in metabolic intermediate biosynthesis; chorismate biosynthesis; chorismate from D-erythrose 4-phosphate and phosphoenolpyruvate: step 7/7. In terms of biological role, catalyzes the anti-1,4-elimination of the C-3 phosphate and the C-6 proR hydrogen from 5-enolpyruvylshikimate-3-phosphate (EPSP) to yield chorismate, which is the branch point compound that serves as the starting substrate for the three terminal pathways of aromatic amino acid biosynthesis. This reaction introduces a second double bond into the aromatic ring system. This Haemophilus influenzae (strain PittEE) protein is Chorismate synthase.